The following is a 213-amino-acid chain: Pyrrolidone-carboxylate peptidase (213 aa).

Catalysis depends on residues Glu78, Cys141, and His165.

It belongs to the peptidase C15 family. As to quaternary structure, homotetramer.

It localises to the cytoplasm. It carries out the reaction Release of an N-terminal pyroglutamyl group from a polypeptide, the second amino acid generally not being Pro.. Removes 5-oxoproline from various penultimate amino acid residues except L-proline. This Alkaliphilus oremlandii (strain OhILAs) (Clostridium oremlandii (strain OhILAs)) protein is Pyrrolidone-carboxylate peptidase.